The chain runs to 117 residues: Ig heavy chain V region RF (117 aa).

Positions 1-19 (MNFGLRLIFLVLVLKGVLC) are cleaved as a signal peptide. The tract at residues 20–49 (DVKLVESGGGLVKLGGSLKLSCAASGFTFS) is framework-1. C41 and C115 are disulfide-bonded. Residues 50 to 54 (SYYMS) are complementarity-determining-1. Residues 55–68 (WVRQTPEKRLELVA) are framework-2. The complementarity-determining-2 stretch occupies residues 69-85 (AINSNGGSTYYPDTVKG). The segment at 86-117 (RFTISRDNAKNTLYLQMSSLKSEDTALYYCAR) is framework-3.

This is Ig heavy chain V region RF from Mus musculus (Mouse).